We begin with the raw amino-acid sequence, 160 residues long: SsrA-binding protein (160 aa).

The tract at residues 134–160 is disordered; it reads YDKRDTERERDSNRELHRAVRNKGKED.

This sequence belongs to the SmpB family.

It localises to the cytoplasm. Required for rescue of stalled ribosomes mediated by trans-translation. Binds to transfer-messenger RNA (tmRNA), required for stable association of tmRNA with ribosomes. tmRNA and SmpB together mimic tRNA shape, replacing the anticodon stem-loop with SmpB. tmRNA is encoded by the ssrA gene; the 2 termini fold to resemble tRNA(Ala) and it encodes a 'tag peptide', a short internal open reading frame. During trans-translation Ala-aminoacylated tmRNA acts like a tRNA, entering the A-site of stalled ribosomes, displacing the stalled mRNA. The ribosome then switches to translate the ORF on the tmRNA; the nascent peptide is terminated with the 'tag peptide' encoded by the tmRNA and targeted for degradation. The ribosome is freed to recommence translation, which seems to be the essential function of trans-translation. This is SsrA-binding protein from Pseudomonas fluorescens (strain SBW25).